We begin with the raw amino-acid sequence, 77 residues long: NEDD8-like protein RUB1 (77 aa).

One can recognise a Ubiquitin-like domain in the interval 1-74 (MIVKVKTLTG…MQLHLVLTLR (74 aa)). Residue Gly76 forms a Glycyl lysine isopeptide (Gly-Lys) (interchain with K-? in acceptor proteins) linkage. Asn77 is a propeptide.

Interacts with CDC53 and DCN1.

Functionally, ubiquitin-like protein modifier that can be covalently attached to lysine residues of target proteins. Activated by the dimeric UBA3-ULA1 E1 enzyme and conjugated by the E2 UBC12 to substrate proteins. RUB1-conjugated (neddylated) substrate proteins include the cullins CDC53, RTT101 and CUL3, and the modification enhances the ubiquitin-ligase activity of the corresponding cullin-RING-based E3 ubiquitin-protein ligase complexes (CRLs). This is NEDD8-like protein RUB1 (RUB1) from Saccharomyces cerevisiae (strain ATCC 204508 / S288c) (Baker's yeast).